The primary structure comprises 209 residues: Octanoyltransferase (209 aa).

One can recognise a BPL/LPL catalytic domain in the interval 30–209 (GEAPEAVYLV…LEVEFIKIFK (180 aa)). Substrate contacts are provided by residues 69–76 (RGGKFTFH), 143–145 (AIG), and 156–158 (GIA). Cys174 serves as the catalytic Acyl-thioester intermediate.

Belongs to the LipB family.

The protein resides in the cytoplasm. It carries out the reaction octanoyl-[ACP] + L-lysyl-[protein] = N(6)-octanoyl-L-lysyl-[protein] + holo-[ACP] + H(+). It functions in the pathway protein modification; protein lipoylation via endogenous pathway; protein N(6)-(lipoyl)lysine from octanoyl-[acyl-carrier-protein]: step 1/2. In terms of biological role, catalyzes the transfer of endogenously produced octanoic acid from octanoyl-acyl-carrier-protein onto the lipoyl domains of lipoate-dependent enzymes. Lipoyl-ACP can also act as a substrate although octanoyl-ACP is likely to be the physiological substrate. This is Octanoyltransferase from Rickettsia bellii (strain OSU 85-389).